The primary structure comprises 222 residues: Riboflavin kinase (222 aa).

Residues 1–94 (METIDAEDAA…AKIFDVKDEQ (94 aa)) form an H-T-H motif-like region. The interval 95-222 (YVLTGTVMSG…ENSEVVVVIG (128 aa)) is riboflavin kinase. 104–109 (GVGEGR) lines the CDP pocket. The Mg(2+) site is built by Thr-133 and Asn-135. FMN contacts are provided by Thr-190 and Glu-198. CDP is bound at residue 203–206 (TQLR).

This sequence belongs to the archaeal riboflavin kinase family. Mg(2+) is required as a cofactor.

It carries out the reaction riboflavin + CTP = CDP + FMN + H(+). Its pathway is cofactor biosynthesis; FMN biosynthesis; FMN from riboflavin (CTP route): step 1/1. Its function is as follows. Catalyzes the CTP-dependent phosphorylation of riboflavin (vitamin B2) to form flavin mononucleotide (FMN). The polypeptide is Riboflavin kinase (ribK) (Methanocorpusculum labreanum (strain ATCC 43576 / DSM 4855 / Z)).